Reading from the N-terminus, the 431-residue chain is Probable 3-hydroxy-3-methylglutaryl-coenzyme A reductase (431 aa).

Residues E85 and D278 each act as charge relay system in the active site. H375 serves as the catalytic Proton donor.

The protein belongs to the HMG-CoA reductase family.

It carries out the reaction (R)-mevalonate + 2 NAD(+) + CoA = (3S)-3-hydroxy-3-methylglutaryl-CoA + 2 NADH + 2 H(+). It functions in the pathway metabolic intermediate metabolism; (R)-mevalonate degradation; (S)-3-hydroxy-3-methylglutaryl-CoA from (R)-mevalonate: step 1/1. Its function is as follows. Converts HMG-CoA to mevalonate. This chain is Probable 3-hydroxy-3-methylglutaryl-coenzyme A reductase, found in Borreliella burgdorferi (strain ATCC 35210 / DSM 4680 / CIP 102532 / B31) (Borrelia burgdorferi).